Here is a 193-residue protein sequence, read N- to C-terminus: Segregation and condensation protein B (193 aa).

This sequence belongs to the ScpB family. In terms of assembly, homodimer. Homodimerization may be required to stabilize the binding of ScpA to the Smc head domains. Component of a cohesin-like complex composed of ScpA, ScpB and the Smc homodimer, in which ScpA and ScpB bind to the head domain of Smc. The presence of the three proteins is required for the association of the complex with DNA.

It is found in the cytoplasm. In terms of biological role, participates in chromosomal partition during cell division. May act via the formation of a condensin-like complex containing Smc and ScpA that pull DNA away from mid-cell into both cell halves. This chain is Segregation and condensation protein B, found in Streptococcus thermophilus (strain CNRZ 1066).